The chain runs to 360 residues: Abhydrolase domain-containing protein lid-1 (360 aa).

Residues 73–203 (AIVFIPGLGA…MSFLGGVAGY (131 aa)) enclose the AB hydrolase-1 domain.

It belongs to the peptidase S33 family. ABHD4/ABHD5 subfamily. As to quaternary structure, interacts with atgl-1.

The protein resides in the lipid droplet. Functionally, acts coordinately with atgl-1 within the lipolytic cascade to distribute stored energy to tissues during nutritional deprivation. This Caenorhabditis elegans protein is Abhydrolase domain-containing protein lid-1.